The sequence spans 362 residues: HLA class I histocompatibility antigen, B alpha chain (362 aa).

Positions 1-24 (MLVMAPRTVLLLLSAALALTETWA) are cleaved as a signal peptide. The VL9 epitope stretch occupies residues 3–11 (VMAPRTVLL). Residues 25–114 (GSHSMRYFYT…LRGYYNQSEA (90 aa)) are alpha-1. Topologically, residues 25–309 (GSHSMRYFYT…PSSQSTVPIV (285 aa)) are extracellular. Asn87 is a binding site for a peptide antigen. A Bw6 motif motif is present at residues 101–107 (SLRNLRG). Tyr108 serves as a coordination point for a peptide antigen. N-linked (GlcNAc...) asparagine glycosylation occurs at Asn110. The interval 115-206 (GSHTLQSMYG…ENGKDKLERA (92 aa)) is alpha-2. Cysteines 125 and 188 form a disulfide. A peptide antigen contacts are provided by Thr167, Lys170, Glu176, Tyr183, and Tyr195. Positions 207–298 (DPPKTHVTHH…GLPKPLTLRW (92 aa)) are alpha-3. Residues 209 to 295 (PKTHVTHHPI…QHEGLPKPLT (87 aa)) form the Ig-like C1-type domain. A disulfide bridge links Cys227 with Cys283. Residues 299 to 309 (EPSSQSTVPIV) form a connecting peptide region. The chain crosses the membrane as a helical span at residues 310-333 (GIVAGLAVLAVVVIGAVVAAVMCR). Over 334–362 (RKSSGGKGGSYSQAACSDSAQGSDVSLTA) the chain is Cytoplasmic. The interval 337–362 (SGGKGGSYSQAACSDSAQGSDVSLTA) is disordered. Over residues 346 to 362 (QAACSDSAQGSDVSLTA) the composition is skewed to polar residues.

In terms of assembly, heterotrimer that consists of an alpha chain HLA-B, a beta chain B2M and a peptide (peptide-HLA-B-B2M). Early in biogenesis, HLA-B-B2M dimer interacts with the components of the peptide-loading complex composed of TAPBP, TAP1-TAP2, TAPBPL, PDIA3/ERP57 and CALR. Interacts with TAP1-TAP2 transporter via TAPBP; this interaction is obligatory for the loading of peptide epitopes delivered to the ER by TAP1-TAP2 transporter. Interacts with TAPBPL; TAPBPL binds peptide-free HLA-B-B2M complexes or those loaded with low affinity peptides, likely facilitating peptide exchange for higher affinity peptides. Only optimally assembled peptide-HLA-B-B2M trimer translocates to the surface of antigen-presenting cells, where it interacts with TCR and CD8 coreceptor on the surface of T cells. HLA-B (via polymorphic alpha-1 and alpha-2 domains) interacts with antigen-specific TCR (via CDR1, CDR2 and CDR3 domains). One HLA-B molecule (mainly via nonpolymorphic alpha-3 domain) interacts with one CD8A homodimer (via CDR-like loop); this interaction ensures peptide-HLA-B-B2M recognition by CD8-positive T cells only. Allele B*57:01 interacts (via Bw4 motif) with KIR3DL1 (via Ig-like C2-type domain); this interaction may interfere with peptide binding. Allele B*46:01 interacts with KIR2DL3. (Microbial infection) Interacts with HTLV-1 accessory protein p12I.

Its subcellular location is the cell membrane. The protein localises to the endoplasmic reticulum membrane. Functionally, antigen-presenting major histocompatibility complex class I (MHCI) molecule. In complex with B2M/beta 2 microglobulin displays primarily viral and tumor-derived peptides on antigen-presenting cells for recognition by alpha-beta T cell receptor (TCR) on HLA-B-restricted CD8-positive T cells, guiding antigen-specific T cell immune response to eliminate infected or transformed cells. May also present self-peptides derived from the signal sequence of secreted or membrane proteins, although T cells specific for these peptides are usually inactivated to prevent autoreactivity. Both the peptide and the MHC molecule are recognized by TCR, the peptide is responsible for the fine specificity of antigen recognition and MHC residues account for the MHC restriction of T cells. Typically presents intracellular peptide antigens of 8 to 13 amino acids that arise from cytosolic proteolysis via constitutive proteasome and IFNG-induced immunoproteasome. Can bind different peptides containing allele-specific binding motifs, which are mainly defined by anchor residues at position 2 and 9. Its function is as follows. Allele B*07:02: Displays peptides sharing a common signature motif, namely a Pro residue at position 2 and mainly a Leu anchor residue at the C-terminus. Presents a long peptide (APRGPHGGAASGL) derived from the cancer-testis antigen CTAG1A/NY-ESO-1, eliciting a polyclonal CD8-positive T cell response against tumor cells. Presents viral epitopes derived from HIV-1 gag-pol (TPQDLNTML) and Nef (RPQVPLRPM). Presents an immunodominant epitope derived from SARS-CoV-2 N/nucleoprotein (SPRWYFYYL). Displays self-peptides including a peptide derived from the signal sequence of HLA-DPB1 (APRTVALTA). Allele B*08:01: Presents to CD8-positive T cells viral epitopes derived from EBV/HHV-4 EBNA3 (QAKWRLQTL), eliciting cytotoxic T cell response. In terms of biological role, allele B*13:02: Presents multiple HIV-1 epitopes derived from gag (RQANFLGKI, GQMREPRGSDI), nef (RQDILDLWI), gag-pol (RQYDQILIE, GQGQWTYQI) and rev (LQLPPLERL), all having in common a Gln residue at position 2 and mainly hydrophobic amino acids Leu, Ile or Val at the C-terminus. Associated with successful control of HIV-1 infection. Functionally, allele B*18:01: Preferentially presents octomeric and nonameric peptides sharing a common motif, namely a Glu at position 2 and Phe or Tyr anchor residues at the C-terminus. Presents an EBV/HHV-4 epitope derived from BZLF1 (SELEIKRY). May present to CD8-positive T cells an antigenic peptide derived from MAGEA3 (MEVDPIGHLY), triggering an anti-tumor immune response. May display a broad repertoire of self-peptides with a preference for peptides derived from RNA-binding proteins. Its function is as follows. Allele B*27:05: Presents to CD8-positive T cells immunodominant viral epitopes derived from HCV POLG (ARMILMTHF), HIV-1 gag (KRWIILGLNK), IAV NP (SRYWAIRTR), SARS-CoV-2 N/nucleoprotein (QRNAPRITF), EBV/HHV-4 EBNA4 (HRCQAIRKK) and EBV/HHV-4 EBNA6 (RRIYDLIEL), conferring longterm protection against viral infection. Can present self-peptides derived from cytosolic and nuclear proteins. All peptides carry an Arg at position 2. The peptide-bound form interacts with NK cell inhibitory receptor KIR3DL1 and inhibits NK cell activation in a peptide-specific way, being particularly sensitive to the nature of the amino acid side chain at position 8 of the antigenic peptide. KIR3DL1 fails to recognize HLA-B*27:05 in complex with B2M and EBV/HHV-4 EBNA6 (RRIYDLIEL) peptide, which can lead to increased activation of NK cells during infection. May present an altered repertoire of peptides in the absence of TAP1-TAP2 and TAPBPL. Allele B*40:01: Presents immunodominant viral epitopes derived from EBV/HHV-4 LMP2 (IEDPPFNSL) and SARS-CoV-2 N/nucleoprotein (MEVTPSGTWL), triggering memory CD8-positive T cell response. Displays self-peptides sharing a signature motif, namely a Glu at position 2 and a Leu anchor residue at the C-terminus. In terms of biological role, allele B*41:01: Displays self-peptides sharing a signature motif, namely a Glu at position 2 and Ala or Pro anchor residues at the C-terminus. Functionally, allele B*44:02: Presents immunodominant viral epitopes derived from EBV/HHV-4 EBNA4 (VEITPYKPTW) and EBNA6 (AEGGVGWRHW, EENLLDFVRF), triggering memory CD8-positive T cell response. Displays self-peptides sharing a signature motif, namely a Glu at position 2 and Phe, Tyr or Trp anchor residues at the C-terminus. Its function is as follows. Allele B*45:01: Displays self-peptides sharing a signature motif, namely a Glu at position 2 and Ala or Pro anchor residues at the C-terminus. Allele B*46:01: Preferentially presents nonameric peptides sharing a signature motif, namely Ala and Leu at position 2 and Tyr, Phe, Leu, or Met anchor residues at the C-terminus. The peptide-bound form interacts with KIR2DL3 and inhibits NK cell cytotoxic response in a peptide-specific way. In terms of biological role, allele B*47:01: Displays self-peptides sharing a signature motif, namely an Asp at position 2 and Leu or Met anchor residues at the C-terminus. Functionally, allele B*49:01: Displays self-peptides sharing a signature motif, namely a Glu at position 2 and Ile or Val anchor residues at the C-terminus. Its function is as follows. Allele B*50:01: Displays self-peptides sharing a signature motif, namely a Glu at position 2 and Ala or Pro anchor residues at the C-terminus. Allele B*51:01: Presents an octomeric HIV-1 epitope derived from gag-pol (TAFTIPSI) to the public TRAV17/TRBV7-3 TCR clonotype, strongly suppressing HIV-1 replication. In terms of biological role, allele B*54:01: Displays peptides sharing a common signature motif, namely a Pro residue at position 2 and Ala anchor residue at the C-terminus. Functionally, allele B*55:01: Displays peptides sharing a common signature motif, namely a Pro residue at position 2 and Ala anchor residue at the C-terminus. Its function is as follows. Allele B*56:01: Displays peptides sharing a common signature motif, namely a Pro residue at position 2 and Ala anchor residue at the C-terminus. Allele B*57:01: The peptide-bound form recognizes KIR3DL1 and inhibits NK cell cytotoxic response. Presents HIV gag peptides (immunodominant KAFSPEVIPMF and subdominant KALGPAATL epitopes) predominantly to CD8-positive T cell clones expressing a TRAV41-containing TCR, triggering HLA-B-restricted T cell responses. In terms of biological role, allele B*67:01: Displays peptides sharing a common signature motif, namely a Pro residue at position 2 and Leu anchor residue at the C-terminus. This Homo sapiens (Human) protein is HLA class I histocompatibility antigen, B alpha chain.